The chain runs to 100 residues: Defensin-6 (100 aa).

The signal sequence occupies residues 1 to 19; it reads MRTLTILTAVLLVALQAKA. Residues 20–68 constitute a propeptide that is removed on maturation; sequence EPLQAEDDPLQAKAYEADAQEQRGANDQDFAVSFAEDASSSLRALGSTR. 3 cysteine pairs are disulfide-bonded: Cys72–Cys99, Cys74–Cys88, and Cys78–Cys98.

This sequence belongs to the alpha-defensin family. Homodimer. Self-assembles into higher-order oligomers termed nanonets, fibril-like structures that entrap microbes. Self-assembly into nanonets seems to protect against proteolytic digestion in duodenal fluid. Interacts with Y.enterocolitica invasin and S.typhimurium fliC/flagellin; the interaction creates an anchoring site for progressive DEFA6 self-assembly into nanonets. Post-translationally, proteolytically cleaved by trypsin at Arg-68; the propeptide is stored in the tissue of the small intestine and the mature peptide is found in the luminal fluid; cleavage may occur during or after release into the lumen. The N-terminal propeptide region suppresses self-assembly and renders DEFA6 propeptide unable to agglutinate bacteria and protect human epithelial cells from bacterial invasion. In terms of processing, under reducing conditions, naturally present in the gut owing to the low redox potential or enzymatically generated by the thioredoxin system, the disulfide bridges are opened leading to a conformational change of DEF6, thereby changing its antimicrobial spectrum. The reduced form exhibits inhibitory activity against anaerobic bacteria, in contrast to the minimal antimicrobial activity of the disulfide-linked oxidized form. The formation of higher-order nanonets and bacterial entrapment is independent of the redox state. In terms of tissue distribution, expressed in Paneth cells of the small intestine (at protein level).

Its subcellular location is the secreted. It localises to the cytoplasmic vesicle. The protein resides in the secretory vesicle. In terms of biological role, host-defense peptide that contributes to intestinal innate immunity and mediates homeostasis at mucosal surfaces by forming higher-order oligomers that capture bacteria and prevent microbial invasion of the epithelium. After binding to bacterial surface proteins, undergoes ordered self-assembly to form fibril-like nanonets that surround and entangle bacteria and thereby prevent bacterial invasion across the epithelial barrier. Entangles and agglutinates Gram-negative bacteria, such as E.coli, S.typhimurium and Y.enterocolitica, and Gram-positive bacteria such as L.monocytogenes, thereby protecting the intestine against invasion by enteric bacterial pathogens. Blocks adhesion of C.albicans to intestinal epithelial cells and thereby suppresses fungal invasion of epithelial cells and biofilm formation. Under reducing conditions and in an acidic environment similar to the intestinal milieu, exhibits inhibitory activity against anaerobic bacteria such as B.adolescentis, L.acidophilus and B.breve, as well as B.longum and S.thermophilus, possibly by leading to alterations in bacterial cell envelope structures. The disulfide-linked oxidized form exhibits negligible antimicrobial activity against Gram-negative and Gram-positive bacteria, as compared to the enteric defensin DEFA5. The polypeptide is Defensin-6 (DEFA6) (Homo sapiens (Human)).